The primary structure comprises 138 residues: RuBisCO chaperone RbcX (138 aa).

The tract at residues 118–138 is disordered; the sequence is VDNFPSETSNGESNNNDSPPS. The segment covering 122–138 has biased composition (polar residues); that stretch reads PSETSNGESNNNDSPPS.

Belongs to the RbcX family. Homodimer. Interacts with the exposed C-terminal peptide of RbcL via its central cleft, contacts a second RbcL monomer via its peripheral polar surface.

The protein resides in the carboxysome. The protein localises to the cytoplasm. An RbcL-specific chaperone. The central cleft of the RbcX homodimer (RbcX2) binds the C-terminus of an RbcL monomer, stabilizing the C-terminus and probably preventing its reassociation with chaperonin GroEL-ES. At the same time the peripheral region of RbcX2 binds a second RbcL monomer, bridging the RbcL homodimers in the correct orientation. The RbcX2(2)-bound RbcL dimers then assemble into the RbcL8 core (RbcL8-(RbcX2)8). RbcS binding triggers the release of RbcX2. This is RuBisCO chaperone RbcX from Synechocystis sp. (strain ATCC 27184 / PCC 6803 / Kazusa).